A 21-amino-acid polypeptide reads, in one-letter code: Venom nerve growth factor Bco12 (21 aa).

The protein belongs to the NGF-beta family. Homodimer; non-covalently linked. In terms of processing, glycosylated. As to expression, expressed by the venom gland.

It is found in the secreted. In terms of biological role, nerve growth factor is important for the development and maintenance of the sympathetic and sensory nervous systems. It stimulates division and differentiation of sympathetic and embryonic sensory neurons as well as basal forebrain cholinergic neurons in the brain. Its relevance in the snake venom is not clear. However, it has been shown to inhibit metalloproteinase-dependent proteolysis of platelet glycoprotein Ib alpha, suggesting a metalloproteinase inhibition to prevent metalloprotease autodigestion and/or protection against prey proteases. Binds a lipid between the two protein chains in the homodimer. The lipid-bound form promotes histamine relase from mouse mast cells, contrary to the lipid-free form. This is Venom nerve growth factor Bco12 from Bothrops cotiara (Cotiara).